The sequence spans 368 residues: Alcohol dehydrogenase 6 (368 aa).

Position 23 is a phosphoserine (Ser23). Zn(2+)-binding residues include Cys47, His69, Cys99, Cys102, Cys105, Cys113, and Cys175. NAD(+)-binding positions include 200 to 205, Asp224, Lys229, and 293 to 295; these read GLGGVG and VGV.

It belongs to the zinc-containing alcohol dehydrogenase family. Class-V subfamily. In terms of assembly, dimer. Zn(2+) serves as cofactor. In terms of tissue distribution, stomach and liver.

The protein resides in the cytoplasm. The enzyme catalyses a primary alcohol + NAD(+) = an aldehyde + NADH + H(+). The catalysed reaction is a secondary alcohol + NAD(+) = a ketone + NADH + H(+). With respect to regulation, inhibited partially by pyrazole (10 mM) in the reaction mixture containing 100 mM ethanol at pH 10.0. Its function is as follows. Alcohol dehydrogenase. Catalyzes the NAD-dependent oxidation of primary alcohols to the corresponding aldehydes. Oxidizes secondary alcohols to the corresponding ketones. This chain is Alcohol dehydrogenase 6 (ADH6), found in Homo sapiens (Human).